The following is a 408-amino-acid chain: Exodeoxyribonuclease 7 large subunit (408 aa).

This sequence belongs to the XseA family. Heterooligomer composed of large and small subunits.

The protein resides in the cytoplasm. It catalyses the reaction Exonucleolytic cleavage in either 5'- to 3'- or 3'- to 5'-direction to yield nucleoside 5'-phosphates.. Functionally, bidirectionally degrades single-stranded DNA into large acid-insoluble oligonucleotides, which are then degraded further into small acid-soluble oligonucleotides. This Alkaliphilus oremlandii (strain OhILAs) (Clostridium oremlandii (strain OhILAs)) protein is Exodeoxyribonuclease 7 large subunit.